A 1157-amino-acid polypeptide reads, in one-letter code: DNA-directed RNA polymerase subunit beta (1157 aa).

The protein belongs to the RNA polymerase beta chain family. As to quaternary structure, the RNAP catalytic core consists of 2 alpha, 1 beta, 1 beta' and 1 omega subunit. When a sigma factor is associated with the core the holoenzyme is formed, which can initiate transcription.

The catalysed reaction is RNA(n) + a ribonucleoside 5'-triphosphate = RNA(n+1) + diphosphate. Functionally, DNA-dependent RNA polymerase catalyzes the transcription of DNA into RNA using the four ribonucleoside triphosphates as substrates. In Tropheryma whipplei (strain Twist) (Whipple's bacillus), this protein is DNA-directed RNA polymerase subunit beta.